We begin with the raw amino-acid sequence, 264 residues long: Transcription initiation factor TFIID subunit 9 (264 aa).

Position 5 is an N6-acetyllysine (Lys-5). Ser-149, Ser-152, Ser-155, and Ser-158 each carry phosphoserine. The interval Val-150–Thr-174 is disordered. Over residues Gly-151–Thr-174 the composition is skewed to polar residues. 4 positions are modified to phosphothreonine: Thr-159, Thr-161, Thr-164, and Thr-178. Phosphoserine occurs at positions 181 and 196. The disordered stretch occupies residues Gln-233–Leu-264. Residues Glu-249–Leu-264 are compositionally biased toward acidic residues.

This sequence belongs to the TAF9 family. Component of the TFIID basal transcription factor complex, composed of TATA-box-binding protein TBP, and a number of TBP-associated factors (TAFs), including TAF1, TAF2, TAF3, TAF4, TAF5, TAF6, TAF7, TAF8, TAF9, TAF10, TAF11, TAF12 and TAF13. Component of the TATA-binding protein-free TAF complex (TFTC), the PCAF histone acetylase complex and the STAGA transcription coactivator-HAT complex. The PCAF complex consists at least of TADA2L/ADA2, SUPT3H/SPT3, TADA3L/ADA3, TAF5L/PAF65-beta, TAF6L/PAF65-alpha, TAF10/TAFII30, TAF12/TAFII20, TAF9/TAFII31 and TRRAP. The STAGA transcription coactivator-HAT complex consists at least of SUPT3H, GCN5L2, SUPT7L, TAF5L, TAF6L, TADA3L, TAD1L, TAF10, TAF12, TRRAP and TAF9. Binds N-terminal domain of p53/TP53 which is essential for transcription. Component of some MLL1/MLL complex, at least composed of the core components KMT2A/MLL1, ASH2L, HCFC1/HCF1, WDR5 and RBBP5, as well as the facultative components BACC1, CHD8, E2F6, HSP70, INO80C, KANSL1, LAS1L, MAX, MCRS1, MGA, MYST1/MOF, PELP1, PHF20, PRP31, RING2, RUVB1/TIP49A, RUVB2/TIP49B, SENP3, TAF1, TAF4, TAF6, TAF7, TAF9 and TEX10. Binds TFIIB and the Herpes simplex virus activator VP16. Forms a heterodimer with TAF6 in a complex with the TAF4B-TAF12 heterodimer. Also interacts with TAF5. Binds directly DNA. Increased DNA binding when complexed with TAF6.

Its subcellular location is the nucleus. The TFIID basal transcription factor complex plays a major role in the initiation of RNA polymerase II (Pol II)-dependent transcription. TFIID recognizes and binds promoters with or without a TATA box via its subunit TBP, a TATA-box-binding protein, and promotes assembly of the pre-initiation complex (PIC). The TFIID complex consists of TBP and TBP-associated factors (TAFs), including TAF1, TAF2, TAF3, TAF4, TAF5, TAF6, TAF7, TAF8, TAF9, TAF10, TAF11, TAF12 and TAF13. TAF9 is also a component of the TBP-free TAFII complex (TFTC), the PCAF histone acetylase complex and the STAGA transcription coactivator-HAT complex. TAF9 and its paralog TAF9B are involved in transcriptional activation as well as repression of distinct but overlapping sets of genes. Essential for cell viability. May have a role in gene regulation associated with apoptosis. This chain is Transcription initiation factor TFIID subunit 9, found in Rattus norvegicus (Rat).